The following is a 324-amino-acid chain: Homocysteine S-methyltransferase 1 (324 aa).

One can recognise a Hcy-binding domain in the interval 6 to 320; that stretch reads IKELIVEHPG…KDIAEIASAV (315 aa). Zn(2+)-binding residues include Cys-238, Cys-305, and Cys-306.

Zn(2+) is required as a cofactor.

It localises to the cytoplasm. The catalysed reaction is S-methyl-L-methionine + L-homocysteine = 2 L-methionine + H(+). Homocysteine S-methyltransferase involved in the conversion of S-adenosylmethionine (AdoMet) to methionine to control the methionine/AdoMet ratio. Also converts S-methylmethionine (SMM) to methionine. The chain is Homocysteine S-methyltransferase 1 (MHT1) from Saccharomyces cerevisiae (strain ATCC 204508 / S288c) (Baker's yeast).